Consider the following 292-residue polypeptide: Elongation factor Ts (292 aa).

The tract at residues 80–83 is involved in Mg(2+) ion dislocation from EF-Tu; it reads TDSV.

It belongs to the EF-Ts family.

It localises to the cytoplasm. In terms of biological role, associates with the EF-Tu.GDP complex and induces the exchange of GDP to GTP. It remains bound to the aminoacyl-tRNA.EF-Tu.GTP complex up to the GTP hydrolysis stage on the ribosome. In Lactiplantibacillus plantarum (strain ATCC BAA-793 / NCIMB 8826 / WCFS1) (Lactobacillus plantarum), this protein is Elongation factor Ts.